Consider the following 117-residue polypeptide: G antigen 4 (117 aa).

Residues 1 to 117 (MSWRGRSTYY…PEEGEKQSQC (117 aa)) are disordered. Acidic residues-rich tracts occupy residues 32–45 (FSDE…EEGE) and 87–96 (ECEDGPDGQE). Residues 103–117 (EEVKTPEEGEKQSQC) are compositionally biased toward basic and acidic residues.

This sequence belongs to the GAGE family. In terms of tissue distribution, expressed in a variety of tumor tissues but not in normal tissues, except testis.

In terms of biological role, antigen, recognized on melanoma by autologous cytolytic T-lymphocytes. This is G antigen 4 from Homo sapiens (Human).